The chain runs to 336 residues: Serpentine receptor class gamma-13 (336 aa).

The next 8 helical transmembrane spans lie at 32-52 (LKYIIQVTLLSINFILNFLII), 68-88 (FFIIYAADLIMGMYMSLSEIL), 93-113 (FIYVTLLCPILAPYFFTPSIF), 133-153 (VFLSFNRMTCVVFPVGYSAIW), 156-176 (ILTPIIIVLFVLPIGIIWNVL), 210-230 (FIVSLILIIVISGVTLYALLI), 246-266 (TMVLSLEFSFLSVIQIYFAFF), and 277-297 (LLRVMYFTYDLLNFSTTIIFI).

Belongs to the nematode receptor-like protein srg family.

It localises to the membrane. The sequence is that of Serpentine receptor class gamma-13 (srg-13) from Caenorhabditis elegans.